The chain runs to 604 residues: Replication protein E1 (604 aa).

The Nuclear localization signal signature appears at 76 to 78 (KRK). Phosphoserine; by host occurs at positions 81 and 89. The segment at 144–307 (QSGDIDISYT…TILGHQSAEA (164 aa)) is DNA-binding region. Residues 406–556 (VNFIMFLAAL…FPMKADNTPQ (151 aa)) form the SF3 helicase domain. 432–439 (GPPNTGKS) is a binding site for ATP. K513 is covalently cross-linked (Glycyl lysine isopeptide (Lys-Gly) (interchain with G-Cter in SUMO)). Residues 579 to 604 (DQEDEGENGESQRAFQCSTRSANEHL) are disordered. Over residues 587-604 (GESQRAFQCSTRSANEHL) the composition is skewed to polar residues.

This sequence belongs to the papillomaviridae E1 protein family. As to quaternary structure, can form hexamers. Interacts with E2 protein; this interaction increases E1 DNA binding specificity. Interacts with host DNA polymerase subunit POLA2. Interacts with host single stranded DNA-binding protein RPA1. Interacts with host TOP1; this interaction stimulates the enzymatic activity of TOP1. Phosphorylated. In terms of processing, sumoylated.

It localises to the host nucleus. It carries out the reaction Couples ATP hydrolysis with the unwinding of duplex DNA by translocating in the 3'-5' direction.. The catalysed reaction is ATP + H2O = ADP + phosphate + H(+). Functionally, ATP-dependent DNA 3'-5' helicase required for initiation of viral DNA replication. It forms a complex with the viral E2 protein. The E1-E2 complex binds to the replication origin which contains binding sites for both proteins. During the initial step, a dimer of E1 interacts with a dimer of protein E2 leading to a complex that binds the viral origin of replication with high specificity. Then, a second dimer of E1 displaces the E2 dimer in an ATP-dependent manner to form the E1 tetramer. Following this, two E1 monomers are added to each half of the site, which results in the formation of two E1 trimers on the viral ori. Subsequently, two hexamers will be created. The double hexamer acts as a bi-directional helicase machinery and unwinds the viral DNA and then recruits the host DNA polymerase to start replication. In Human papillomavirus 25, this protein is Replication protein E1.